Here is a 702-residue protein sequence, read N- to C-terminus: DNA ligase (702 aa).

NAD(+) is bound by residues 32-36 (DAEYD) and 81-82 (SL). A disordered region spans residues 104-125 (AESSAQKASLNPLVRDSDQKNR). Glutamate 139 serves as a coordination point for NAD(+). Residue lysine 141 is the N6-AMP-lysine intermediate of the active site. Arginine 162, glutamate 199, lysine 316, and lysine 340 together coordinate NAD(+). 4 residues coordinate Zn(2+): cysteine 434, cysteine 437, cysteine 452, and cysteine 458. In terms of domain architecture, BRCT spans 616–702 (KPNHPFRDKT…KALKPEGTKV (87 aa)).

This sequence belongs to the NAD-dependent DNA ligase family. LigA subfamily. Mg(2+) serves as cofactor. Mn(2+) is required as a cofactor.

The enzyme catalyses NAD(+) + (deoxyribonucleotide)n-3'-hydroxyl + 5'-phospho-(deoxyribonucleotide)m = (deoxyribonucleotide)n+m + AMP + beta-nicotinamide D-nucleotide.. In terms of biological role, DNA ligase that catalyzes the formation of phosphodiester linkages between 5'-phosphoryl and 3'-hydroxyl groups in double-stranded DNA using NAD as a coenzyme and as the energy source for the reaction. It is essential for DNA replication and repair of damaged DNA. The protein is DNA ligase of Hamiltonella defensa subsp. Acyrthosiphon pisum (strain 5AT).